Reading from the N-terminus, the 457-residue chain is Oxygen-independent coproporphyrinogen III oxidase (457 aa).

In terms of domain architecture, Radical SAM core spans 47-279; that stretch reads LKNPMPLSLY…EILESLISFL (233 aa). Tyr-56 contributes to the S-adenosyl-L-methionine binding site. [4Fe-4S] cluster-binding residues include Cys-62 and Cys-66. Phe-68 is an S-adenosyl-L-methionine binding site. Cys-69 contacts [4Fe-4S] cluster. S-adenosyl-L-methionine is bound by residues Gly-113, 114-115, Glu-147, Gln-174, Arg-186, Asp-211, Ala-245, and Ile-331; that span reads GT.

The protein belongs to the anaerobic coproporphyrinogen-III oxidase family. Monomer. [4Fe-4S] cluster is required as a cofactor.

The protein resides in the cytoplasm. It catalyses the reaction coproporphyrinogen III + 2 S-adenosyl-L-methionine = protoporphyrinogen IX + 2 5'-deoxyadenosine + 2 L-methionine + 2 CO2. It participates in porphyrin-containing compound metabolism; protoporphyrin-IX biosynthesis; protoporphyrinogen-IX from coproporphyrinogen-III (AdoMet route): step 1/1. Its function is as follows. Involved in the heme biosynthesis. Catalyzes the anaerobic oxidative decarboxylation of propionate groups of rings A and B of coproporphyrinogen III to yield the vinyl groups in protoporphyrinogen IX. The protein is Oxygen-independent coproporphyrinogen III oxidase (hemN) of Helicobacter pylori (strain J99 / ATCC 700824) (Campylobacter pylori J99).